The chain runs to 310 residues: MIIVTGGAGLIGSNIIKALNDRGHTDILVVDNLKDGTKFANLADLNIADYMDKEDFLIAILADEDFGNVEAVFHEGACSSTTEWDGKYMMDNNYQYSKELLHWCLEHQVPFLYASSAATYGGRNADFIEERQYEQPLNVYGYSKMLFDHYVRDILPEAQSQVCGFRYFNVYGPREGHKGSMASVAFHLNTQLKNGENPKLFAGSDGFKRDFIYVEDVASVNLWFWENAVSGIFNCGTGRAESFQEVADAALKYHQSGDIEYIPFPDKLKGRYQEFTLADLTKLRAAGYDKPFKTVAEGVADYMAWLNRNA.

Residues 10–11 (LI), 31–32 (DN), Lys-38, Lys-53, 75–79 (EGACS), and Asn-92 each bind NADP(+). Residue Tyr-140 is the Proton acceptor of the active site. Lys-144 is an NADP(+) binding site. Asn-169 provides a ligand contact to substrate. The NADP(+) site is built by Val-170 and Lys-178. Lys-178 acts as the Proton acceptor in catalysis. Substrate contacts are provided by residues Ser-180, His-187, 201 to 204 (FAGS), Arg-209, and Tyr-272.

It belongs to the NAD(P)-dependent epimerase/dehydratase family. HldD subfamily. Homopentamer. It depends on NADP(+) as a cofactor.

It carries out the reaction ADP-D-glycero-beta-D-manno-heptose = ADP-L-glycero-beta-D-manno-heptose. It functions in the pathway nucleotide-sugar biosynthesis; ADP-L-glycero-beta-D-manno-heptose biosynthesis; ADP-L-glycero-beta-D-manno-heptose from D-glycero-beta-D-manno-heptose 7-phosphate: step 4/4. In terms of biological role, catalyzes the interconversion between ADP-D-glycero-beta-D-manno-heptose and ADP-L-glycero-beta-D-manno-heptose via an epimerization at carbon 6 of the heptose. This is ADP-L-glycero-D-manno-heptose-6-epimerase from Erwinia tasmaniensis (strain DSM 17950 / CFBP 7177 / CIP 109463 / NCPPB 4357 / Et1/99).